We begin with the raw amino-acid sequence, 150 residues long: Ribonuclease P protein subunit p21 (150 aa).

At alanine 2 the chain carries N-acetylalanine. Zn(2+) contacts are provided by cysteine 62, cysteine 65, cysteine 92, and cysteine 95. The segment at 121 to 150 is disordered; it reads QADINPSEPLPNIADLPKENIQTQALNTSE. Residues 140 to 150 show a composition bias toward polar residues; it reads NIQTQALNTSE.

Belongs to the eukaryotic/archaeal RNase P protein component 4 family. RNase P consists of a catalytic RNA moiety and about 10 protein subunits; POP1, POP4, POP5, POP7, RPP14, RPP21, RPP25, RPP30, RPP38 and RPP40. Within the RNase P complex, POP1, POP7 and RPP25 form the 'finger' subcomplex, POP5, RPP14, RPP40 and homodimeric RPP30 form the 'palm' subcomplex, and RPP21, POP4 and RPP38 form the 'wrist' subcomplex. All subunits of the RNase P complex interact with the catalytic RNA.

Its subcellular location is the nucleus. The protein localises to the nucleolus. In terms of biological role, component of ribonuclease P, a ribonucleoprotein complex that generates mature tRNA molecules by cleaving their 5'-ends. This chain is Ribonuclease P protein subunit p21 (Rpp21), found in Mus musculus (Mouse).